Reading from the N-terminus, the 516-residue chain is Nucleolar complex protein 4 homolog (516 aa).

3 helical membrane passes run 296-316 (SACDVGGAISLLALNGLFILI), 347-367 (FFHLADLFLSSSHLPAYLVAA), and 375-395 (LALTAPPEALLMVLPLICNLL).

The protein belongs to the CBF/MAK21 family.

Its subcellular location is the nucleus membrane. It is found in the nucleus. The protein localises to the nucleolus. This is Nucleolar complex protein 4 homolog (Noc4l) from Mus musculus (Mouse).